The sequence spans 111 residues: Ribonuclease P protein component (111 aa).

Belongs to the RnpA family. As to quaternary structure, consists of a catalytic RNA component (M1 or rnpB) and a protein subunit.

It carries out the reaction Endonucleolytic cleavage of RNA, removing 5'-extranucleotides from tRNA precursor.. Functionally, RNaseP catalyzes the removal of the 5'-leader sequence from pre-tRNA to produce the mature 5'-terminus. It can also cleave other RNA substrates such as 4.5S RNA. The protein component plays an auxiliary but essential role in vivo by binding to the 5'-leader sequence and broadening the substrate specificity of the ribozyme. The protein is Ribonuclease P protein component of Borrelia garinii subsp. bavariensis (strain ATCC BAA-2496 / DSM 23469 / PBi) (Borreliella bavariensis).